Here is a 624-residue protein sequence, read N- to C-terminus: Prickle planar cell polarity protein 3 (624 aa).

Over residues 1–12 (MFARGSRRRRSG) the composition is skewed to basic residues. The disordered stretch occupies residues 1 to 26 (MFARGSRRRRSGRAPPEAEDPARGQP). The 109-residue stretch at 74 to 182 (SDFQRHSISD…TVRIFPVTIT (109 aa)) folds into the PET domain. LIM zinc-binding domains follow at residues 184–249 (AICE…CLRP), 250–309 (RCQA…RHAE), and 310–373 (YCDG…SETT). Positions 371–617 (ETTAPGPGRR…SHPVMPRQTR (247 aa)) are disordered. Low complexity predominate over residues 383 to 409 (SAGTVTTPLTTSTASFSATEGTSETAS). Residues 447–458 (PEPPTESPGHPA) are compositionally biased toward pro residues. Phosphoserine occurs at positions 475 and 491. A compositionally biased stretch (basic residues) spans 509-541 (SCHHHHHHRRRRQRHRRRGSHHHHHHPGRHGHH). Residues 545–564 (LGSGSDSGSCSSSPSSPSSE) show a composition bias toward low complexity. Positions 587–601 (RTTQDTSTETFNSPA) are enriched in polar residues.

The protein belongs to the prickle / espinas / testin family. As to quaternary structure, interacts with VANGL2 via its C-terminus. The VANGL2-dependent membrane recruitment of PRICKLE3 is a prerequisite for its polarization. Interacts with WTIP. WTIP is involved in the recruitment of PRICKLE3 to the basal body. Interacts with MT-ATP8, a component of the mitochondrial complex V. Widely expressed.

It is found in the cytoplasm. The protein resides in the cell membrane. The protein localises to the mitochondrion. Functionally, involved in the planar cell polarity (PCP) pathway that is essential for the polarization of epithelial cells during morphogenetic processes, including gastrulation and neurulation. PCP is maintained by two molecular modules, the global and the core modules, PRICKLE3 being part of the core module. Distinct complexes of the core module segregate to opposite sides of the cell, where they interact with the opposite complex in the neighboring cell at or near the adherents junctions. Involved in the organization of the basal body. Involved in cilia growth and positioning. Required for proper assembly, stability, and function of mitochondrial membrane ATP synthase (mitochondrial complex V). The chain is Prickle planar cell polarity protein 3 from Mus musculus (Mouse).